A 337-amino-acid chain; its full sequence is Adenine deaminase (337 aa).

Residues histidine 14, histidine 16, and histidine 194 each contribute to the Zn(2+) site. Residue glutamate 197 is the Proton donor of the active site. Aspartate 275 serves as a coordination point for Zn(2+). Aspartate 276 serves as a coordination point for substrate.

Belongs to the metallo-dependent hydrolases superfamily. Adenosine and AMP deaminases family. Adenine deaminase type 2 subfamily. The cofactor is Zn(2+).

It catalyses the reaction adenine + H2O + H(+) = hypoxanthine + NH4(+). Its function is as follows. Catalyzes the hydrolytic deamination of adenine to hypoxanthine. Plays an important role in the purine salvage pathway and in nitrogen catabolism. In Vibrio parahaemolyticus serotype O3:K6 (strain RIMD 2210633), this protein is Adenine deaminase.